Reading from the N-terminus, the 310-residue chain is ADP-L-glycero-D-manno-heptose-6-epimerase (310 aa).

NADP(+)-binding positions include 10–11 (FI), 31–32 (DN), lysine 38, lysine 53, 75–79 (EGACS), and asparagine 92. Tyrosine 140 acts as the Proton acceptor in catalysis. Lysine 144 serves as a coordination point for NADP(+). Asparagine 169 is a substrate binding site. Residues valine 170 and lysine 178 each contribute to the NADP(+) site. The Proton acceptor role is filled by lysine 178. Substrate-binding positions include serine 180, histidine 187, 201-204 (FEGS), arginine 209, and tyrosine 272.

The protein belongs to the NAD(P)-dependent epimerase/dehydratase family. HldD subfamily. As to quaternary structure, homopentamer. It depends on NADP(+) as a cofactor.

It catalyses the reaction ADP-D-glycero-beta-D-manno-heptose = ADP-L-glycero-beta-D-manno-heptose. It participates in nucleotide-sugar biosynthesis; ADP-L-glycero-beta-D-manno-heptose biosynthesis; ADP-L-glycero-beta-D-manno-heptose from D-glycero-beta-D-manno-heptose 7-phosphate: step 4/4. It functions in the pathway bacterial outer membrane biogenesis; LPS core biosynthesis. Catalyzes the interconversion between ADP-D-glycero-beta-D-manno-heptose and ADP-L-glycero-beta-D-manno-heptose via an epimerization at carbon 6 of the heptose. The sequence is that of ADP-L-glycero-D-manno-heptose-6-epimerase from Klebsiella pneumoniae.